Reading from the N-terminus, the 680-residue chain is Extracellular matrix protein 2 (680 aa).

An N-terminal signal peptide occupies residues 1–20 (MKFSSLYCFLLLLIFQTDFG). The VWFC domain maps to 100-157 (GHCLANGMIMYNKAVWSPEPCTTCLCLNGKVLCDETKCHPQMCPQTIIPEGECCPVCS). The span at 189–198 (QLEEDEEEVK) shows a compositional bias: acidic residues. The disordered stretch occupies residues 189-293 (QLEEDEEEVK…RLPIPATPRG (105 aa)). Residues 223 to 238 (QSREGKAQRPEEEGRQ) are compositionally biased toward basic and acidic residues. Over residues 249 to 272 (NEEDDDEEEEDDDDEEEDDDDEDE) the composition is skewed to acidic residues. Positions 275-277 (RGD) match the Cell attachment site motif. One can recognise an LRRNT domain in the interval 288 to 325 (PATPRGIPSLPSMCSLSYKTISCISADLTQIPPLTAPE). LRR repeat units lie at residues 349–369 (NLER…GPKA), 375–396 (NLMR…LPST), 397–417 (LEEL…SLSD), 420–440 (QLVT…NSLA), 446–466 (SLSY…GLPA), 467–488 (SIEE…SFNH), 491–511 (KINV…APLA), 517–538 (NLES…LPKS), 539–559 (LVHL…VFGH), 563–583 (GLEY…DRVS), 590–611 (SLRE…VQEM), 613–634 (ALHF…QICN), and 642–665 (NLQH…AFSC). Asn-359 carries an N-linked (GlcNAc...) asparagine glycan. The N-linked (GlcNAc...) asparagine glycan is linked to Asn-430. Asn-487 is a glycosylation site (N-linked (GlcNAc...) asparagine).

It belongs to the small leucine-rich proteoglycan (SLRP) family. SLRP class I subfamily. Interacts with numerous extracellular matrix proteins. Interacts with MSL1 and RASSF1.

It localises to the secreted. Its subcellular location is the extracellular space. The protein localises to the extracellular matrix. In terms of biological role, promotes matrix assembly and cell adhesiveness. This is Extracellular matrix protein 2 (ECM2) from Bos taurus (Bovine).